Consider the following 351-residue polypeptide: Uroporphyrinogen decarboxylase (351 aa).

Substrate is bound by residues 25–29 (RQAGR), Asp-74, Tyr-151, Ser-206, and His-325.

The protein belongs to the uroporphyrinogen decarboxylase family. Homodimer.

It is found in the cytoplasm. It carries out the reaction uroporphyrinogen III + 4 H(+) = coproporphyrinogen III + 4 CO2. The protein operates within porphyrin-containing compound metabolism; protoporphyrin-IX biosynthesis; coproporphyrinogen-III from 5-aminolevulinate: step 4/4. Catalyzes the decarboxylation of four acetate groups of uroporphyrinogen-III to yield coproporphyrinogen-III. This is Uroporphyrinogen decarboxylase from Chlorobium limicola (strain DSM 245 / NBRC 103803 / 6330).